Reading from the N-terminus, the 272-residue chain is Glutamate racemase (272 aa).

Residues 10–11 (DS) and 42–43 (YG) contribute to the substrate site. Residue Cys74 is the Proton donor/acceptor of the active site. 75–76 (NT) contributes to the substrate binding site. Cys185 (proton donor/acceptor) is an active-site residue. 186 to 187 (TH) is a binding site for substrate.

It belongs to the aspartate/glutamate racemases family.

It carries out the reaction L-glutamate = D-glutamate. It functions in the pathway cell wall biogenesis; peptidoglycan biosynthesis. Provides the (R)-glutamate required for cell wall biosynthesis. This chain is Glutamate racemase, found in Bacillus pumilus (strain SAFR-032).